Reading from the N-terminus, the 306-residue chain is MNNLEERGHLLTEQINPNSQNLDQLSSLELVELFNAEDAQTLKAIAGAKLELAKAIEVISEALRQGGRLFYVGAGTSGRLGVLDAAECPPTFCTPPEMVQGIIAGGAQALIRSSEDLEDKLEDGASIIAQREITPLDVVVGITAGGTTPFVHGALMAAKTRRATTIAISCVPVEQVSIEADIDIRLLTGPEILAGSTRLKAGTVTKMALNILSTGAMVQLGKVYGNRMIDVAVTNRKLHDRALRIIQDLTDLNRTEAGSLLERSGRQVKLALLMHSLGVDAETGAHLLATHHGNLRAALNSALLKD.

In terms of domain architecture, SIS spans 59 to 222 (ISEALRQGGR…STGAMVQLGK (164 aa)). The active-site Proton donor is the E87. E118 is an active-site residue.

It belongs to the GCKR-like family. MurNAc-6-P etherase subfamily. As to quaternary structure, homodimer.

It carries out the reaction N-acetyl-D-muramate 6-phosphate + H2O = N-acetyl-D-glucosamine 6-phosphate + (R)-lactate. The protein operates within amino-sugar metabolism; N-acetylmuramate degradation. Its function is as follows. Specifically catalyzes the cleavage of the D-lactyl ether substituent of MurNAc 6-phosphate, producing GlcNAc 6-phosphate and D-lactate. The chain is N-acetylmuramic acid 6-phosphate etherase from Gloeothece citriformis (strain PCC 7424) (Cyanothece sp. (strain PCC 7424)).